Consider the following 287-residue polypeptide: Putative B3 domain-containing protein Os08g0157700 (287 aa).

The segment covering 17–29 has biased composition (acidic residues); the sequence is ATEEEEEEEEEEQ. The disordered stretch occupies residues 17 to 36; the sequence is ATEEEEEEEEEEQALGQEPA. A DNA-binding region (TF-B3) is located at residues 71–168; that stretch reads FDKVVTPSDV…RYFIDYRHCH (98 aa).

It localises to the nucleus. The protein is Putative B3 domain-containing protein Os08g0157700 of Oryza sativa subsp. japonica (Rice).